A 505-amino-acid polypeptide reads, in one-letter code: 4-alpha-glucanotransferase (505 aa).

This sequence belongs to the disproportionating enzyme family.

The protein localises to the cytoplasm. The catalysed reaction is Transfers a segment of a (1-&gt;4)-alpha-D-glucan to a new position in an acceptor, which may be glucose or a (1-&gt;4)-alpha-D-glucan.. This Synechocystis sp. (strain ATCC 27184 / PCC 6803 / Kazusa) protein is 4-alpha-glucanotransferase (malQ).